A 418-amino-acid chain; its full sequence is Tryptophan synthase beta chain (418 aa).

Residues 1–18 (MTSTLPNASTPDPASLQP) show a composition bias toward polar residues. A disordered region spans residues 1-23 (MTSTLPNASTPDPASLQPSVRPG). N6-(pyridoxal phosphate)lysine is present on lysine 111.

This sequence belongs to the TrpB family. Tetramer of two alpha and two beta chains. Requires pyridoxal 5'-phosphate as cofactor.

It catalyses the reaction (1S,2R)-1-C-(indol-3-yl)glycerol 3-phosphate + L-serine = D-glyceraldehyde 3-phosphate + L-tryptophan + H2O. Its pathway is amino-acid biosynthesis; L-tryptophan biosynthesis; L-tryptophan from chorismate: step 5/5. Its function is as follows. The beta subunit is responsible for the synthesis of L-tryptophan from indole and L-serine. The polypeptide is Tryptophan synthase beta chain (Parasynechococcus marenigrum (strain WH8102)).